The sequence spans 438 residues: 23S rRNA (uracil(1939)-C(5))-methyltransferase RlmD (438 aa).

The region spanning 8–68 (KQKTNNVQTI…RQYGHATAKK (61 aa)) is the TRAM domain. 4 residues coordinate [4Fe-4S] cluster: C81, C87, C90, and C168. Residues Q271, F300, N305, E321, D348, and D369 each coordinate S-adenosyl-L-methionine. Catalysis depends on C395, which acts as the Nucleophile.

This sequence belongs to the class I-like SAM-binding methyltransferase superfamily. RNA M5U methyltransferase family. RlmD subfamily.

The catalysed reaction is uridine(1939) in 23S rRNA + S-adenosyl-L-methionine = 5-methyluridine(1939) in 23S rRNA + S-adenosyl-L-homocysteine + H(+). In terms of biological role, catalyzes the formation of 5-methyl-uridine at position 1939 (m5U1939) in 23S rRNA. The sequence is that of 23S rRNA (uracil(1939)-C(5))-methyltransferase RlmD from Haemophilus influenzae (strain 86-028NP).